Reading from the N-terminus, the 398-residue chain is Yellow-related salivary protein SP04 (398 aa).

Positions 1–18 (MKWFLFLLSTIFVQGILG) are cleaved as a signal peptide. The segment at 73–94 (TLTEIERKKHPERSPPLSKFSG) is disordered. A compositionally biased stretch (basic and acidic residues) spans 75–85 (TEIERKKHPER).

The protein belongs to the major royal jelly protein family. As to expression, female salivary gland (at protein level).

The protein localises to the secreted. Probably modulates blood feeding of sand flies on vertebrate species by binding and sequestering different mediators involved in the host response. Binds biogenic amines. Binds serotonin with high affinity. Binds histamine with low affinity. The chain is Yellow-related salivary protein SP04 from Phlebotomus argentipes (Phlebotomine sand fly).